The sequence spans 488 residues: 3-octaprenyl-4-hydroxybenzoate carboxy-lyase (488 aa).

Asparagine 172 contributes to the Mn(2+) binding site. Prenylated FMN-binding positions include 175–177 (IYR), 189–191 (RWL), and 194–195 (RG). Position 238 (glutamate 238) interacts with Mn(2+). Aspartate 287 serves as the catalytic Proton donor.

Belongs to the UbiD family. Homohexamer. Prenylated FMN serves as cofactor. It depends on Mn(2+) as a cofactor.

It is found in the cell membrane. It carries out the reaction a 4-hydroxy-3-(all-trans-polyprenyl)benzoate + H(+) = a 2-(all-trans-polyprenyl)phenol + CO2. It participates in cofactor biosynthesis; ubiquinone biosynthesis. In terms of biological role, catalyzes the decarboxylation of 3-octaprenyl-4-hydroxy benzoate to 2-octaprenylphenol, an intermediate step in ubiquinone biosynthesis. This is 3-octaprenyl-4-hydroxybenzoate carboxy-lyase from Legionella pneumophila (strain Paris).